We begin with the raw amino-acid sequence, 134 residues long: Tail assembly protein Gp24 (134 aa).

This sequence belongs to the L5likevirus tail assembly protein family. In terms of assembly, interacts with tail assembly protein Gp25 and tape measure protein.

In terms of biological role, promotes tail assembly by creating a scaffold for the tail tube proteins. The tail assembly proteins Gp24 and Gp25 would wrap the linear tape measure protein to create a tail assembly scaffold. It would allow polymerization of tail tube protein during which Gp24 and Gp25 are released and therefore are absent from the mature virion. The tail assembly protein Gp25 is produced by a rare -1 ribosomal frameshift. The ratio Gp24/Gp25 is important for proper tail assembly. This is Tail assembly protein Gp24 (24) from Mycobacterium (Mycobacteriophage D29).